The sequence spans 321 residues: Ribose-phosphate pyrophosphokinase (321 aa).

Residues 44–46 (DGE) and 103–104 (RQ) each bind ATP. Mg(2+)-binding residues include histidine 137 and aspartate 179. Residue lysine 202 is part of the active site. D-ribose 5-phosphate is bound by residues arginine 204, aspartate 228, and 232 to 236 (DTAGT).

The protein belongs to the ribose-phosphate pyrophosphokinase family. Class I subfamily. As to quaternary structure, homohexamer. Mg(2+) serves as cofactor.

It is found in the cytoplasm. It carries out the reaction D-ribose 5-phosphate + ATP = 5-phospho-alpha-D-ribose 1-diphosphate + AMP + H(+). It functions in the pathway metabolic intermediate biosynthesis; 5-phospho-alpha-D-ribose 1-diphosphate biosynthesis; 5-phospho-alpha-D-ribose 1-diphosphate from D-ribose 5-phosphate (route I): step 1/1. Its function is as follows. Involved in the biosynthesis of the central metabolite phospho-alpha-D-ribosyl-1-pyrophosphate (PRPP) via the transfer of pyrophosphoryl group from ATP to 1-hydroxyl of ribose-5-phosphate (Rib-5-P). This chain is Ribose-phosphate pyrophosphokinase, found in Staphylococcus saprophyticus subsp. saprophyticus (strain ATCC 15305 / DSM 20229 / NCIMB 8711 / NCTC 7292 / S-41).